Here is a 310-residue protein sequence, read N- to C-terminus: NADP-dependent D-sorbitol-6-phosphate dehydrogenase (310 aa).

Catalysis depends on Tyr-48, which acts as the Proton donor. His-108 lines the substrate pocket. 210–272 (TPLGGAAANK…SSKIQRLKEN (63 aa)) provides a ligand contact to NADP(+).

The protein belongs to the aldo/keto reductase family.

The catalysed reaction is D-sorbitol 6-phosphate + NADP(+) = aldehydo-D-glucose 6-phosphate + NADPH + H(+). Its function is as follows. Synthesizes sorbitol-6-phosphate, a key intermediate in the synthesis of sorbitol which is a major photosynthetic product in many members of the Rosaceae family. This Malus domestica (Apple) protein is NADP-dependent D-sorbitol-6-phosphate dehydrogenase (S6PDH).